Consider the following 294-residue polypeptide: UDP-3-O-acyl-N-acetylglucosamine deacetylase (294 aa).

Zn(2+) contacts are provided by histidine 75, histidine 232, and aspartate 236. The Proton donor role is filled by histidine 259.

The protein belongs to the LpxC family. It depends on Zn(2+) as a cofactor.

It catalyses the reaction a UDP-3-O-[(3R)-3-hydroxyacyl]-N-acetyl-alpha-D-glucosamine + H2O = a UDP-3-O-[(3R)-3-hydroxyacyl]-alpha-D-glucosamine + acetate. Its pathway is glycolipid biosynthesis; lipid IV(A) biosynthesis; lipid IV(A) from (3R)-3-hydroxytetradecanoyl-[acyl-carrier-protein] and UDP-N-acetyl-alpha-D-glucosamine: step 2/6. In terms of biological role, catalyzes the hydrolysis of UDP-3-O-myristoyl-N-acetylglucosamine to form UDP-3-O-myristoylglucosamine and acetate, the committed step in lipid A biosynthesis. This Campylobacter jejuni subsp. jejuni serotype O:2 (strain ATCC 700819 / NCTC 11168) protein is UDP-3-O-acyl-N-acetylglucosamine deacetylase.